Reading from the N-terminus, the 655-residue chain is Sphingomyelin phosphodiesterase 3 (655 aa).

Over 1–10 the chain is Cytoplasmic; the sequence is MVLYTTPFPN. Positions 11–31 form an intramembrane region, helical; that stretch reads SCLSALHAVSWALIFPCYWLV. At 32–64 the chain is on the cytoplasmic side; that stretch reads DRLLASFIPTTYEKRQRADDPCCLQLFCTVLFT. Residues cysteine 53, cysteine 54, and cysteine 59 are each lipidated (S-palmitoyl cysteine). The segment at residues 65–85 is an intramembrane region (helical); it reads PVYLALLVAALPFAFLGFIFW. Over 86–655 the chain is Cytoplasmic; the sequence is SPLQSARRPY…LMVSAGEEEA (570 aa). Phosphoserine is present on serine 178. The interval 209-318 is disordered; sequence VEYKGDGGRH…SGGSGEPGAN (110 aa). 2 stretches are compositionally biased toward basic and acidic residues: residues 211-221 and 246-255; these read YKGDGGRHPSD and GGEEGGRPQE. The residue at position 289 (serine 289) is a Phosphoserine. Glutamate 362 contacts Mg(2+). 2 S-palmitoyl cysteine lipidation sites follow: cysteine 395 and cysteine 396. The active-site Proton acceptor is the histidine 639.

The protein belongs to the neutral sphingomyelinase family. Mg(2+) serves as cofactor. Post-translationally, palmitoylated, palmitoylation-deficient proteins are targeted for lysosomal degradation. In terms of tissue distribution, predominantly expressed in brain (at protein level).

The protein localises to the golgi apparatus membrane. Its subcellular location is the cell membrane. The enzyme catalyses a sphingomyelin + H2O = phosphocholine + an N-acylsphing-4-enine + H(+). It carries out the reaction N-(15Z-tetracosenoyl)sphing-4-enine-1-phosphocholine + H2O = N-(15Z-tetracosenoyl)-sphing-4-enine + phosphocholine + H(+). It catalyses the reaction N-(tetracosanoyl)-sphing-4-enine-1-phosphocholine + H2O = N-tetracosanoyl-sphing-4-enine + phosphocholine + H(+). The catalysed reaction is N-(hexadecanoyl)-sphing-4-enine-1-phosphocholine + H2O = N-hexadecanoylsphing-4-enine + phosphocholine + H(+). The enzyme catalyses an N-(acyl)-sphingosylphosphocholine + H2O = an N-acyl-sphingoid base + phosphocholine + H(+). It carries out the reaction 1-hexadecanoyl-sn-glycero-3-phosphocholine + H2O = 1-hexadecanoyl-sn-glycerol + phosphocholine + H(+). It catalyses the reaction 1-O-octadecyl-sn-glycero-3-phosphocholine + H2O = 1-O-octadecyl-sn-glycerol + phosphocholine + H(+). The catalysed reaction is a sphingosylphosphocholine + H2O = a sphingoid base + phosphocholine + H(+). It participates in lipid metabolism; sphingolipid metabolism. Its activity is regulated as follows. Inhibited by nSMase inhibitor GW4869. Binding of anionic phospholipids (APLs) such as phosphatidylserine (PS) and phosphatidic acid (PA) increases enzymatic activity. Functionally, catalyzes the hydrolysis of sphingomyelin to form ceramide and phosphocholine. Ceramide mediates numerous cellular functions, such as apoptosis and growth arrest, and is capable of regulating these 2 cellular events independently. Also hydrolyzes sphingosylphosphocholine. Regulates the cell cycle by acting as a growth suppressor in confluent cells. Probably acts as a regulator of postnatal development and participates in bone and dentin mineralization. Binds to anionic phospholipids (APLs) such as phosphatidylserine (PS) and phosphatidic acid (PA) that modulate enzymatic activity and subcellular location. May be involved in IL-1-beta-induced JNK activation in hepatocytes. May act as a mediator in transcriptional regulation of NOS2/iNOS via the NF-kappa-B activation under inflammatory conditions. In Mus musculus (Mouse), this protein is Sphingomyelin phosphodiesterase 3.